The chain runs to 414 residues: Probable 1-acylglycerol-3-phosphate O-acyltransferase (414 aa).

Positions 117–382 (PTLVMVHGYG…GGHFVFIDNP (266 aa)) constitute an AB hydrolase-1 domain. Positions 193–197 (GHSFG) match the GXSXG motif. Residues 375 to 380 (HFVFID) carry the HXXXXD motif motif.

Belongs to the peptidase S33 family. ABHD4/ABHD5 subfamily.

Its subcellular location is the cytoplasm. It carries out the reaction a 1-acyl-sn-glycero-3-phosphate + an acyl-CoA = a 1,2-diacyl-sn-glycero-3-phosphate + CoA. Lysophosphatidic acid acyltransferase which functions in phosphatidic acid biosynthesis. May regulate neutral lipid accumulation and participate in the regulation of lipid turnover in vegetative cells. May possess additional triacylglycerol lipase and phospholipase A2 activities in vitro. In Oryza sativa subsp. japonica (Rice), this protein is Probable 1-acylglycerol-3-phosphate O-acyltransferase.